The following is a 391-amino-acid chain: Phosphoglycerate kinase (391 aa).

Residues 21–23, arginine 36, 59–62, arginine 113, and arginine 146 each bind substrate; these read DLN and HLGR. ATP-binding positions include lysine 197, glutamate 319, and 345–348; that span reads GGDT.

Belongs to the phosphoglycerate kinase family. Monomer.

The protein resides in the cytoplasm. The catalysed reaction is (2R)-3-phosphoglycerate + ATP = (2R)-3-phospho-glyceroyl phosphate + ADP. It functions in the pathway carbohydrate degradation; glycolysis; pyruvate from D-glyceraldehyde 3-phosphate: step 2/5. The sequence is that of Phosphoglycerate kinase from Shewanella baltica (strain OS223).